The primary structure comprises 528 residues: Beta-galactoside alpha-2,6-sialyltransferase 2 (528 aa).

The Cytoplasmic portion of the chain corresponds to 1–10 (MKPNLKQWKQ). A helical; Signal-anchor for type II membrane protein membrane pass occupies residues 11–31 (LMLFGIFAWGLLFLVIFIYFT). Topologically, residues 32–528 (DSNSAEPVPS…CPERNNFPPL (497 aa)) are lumenal. 3 N-linked (GlcNAc...) asparagine glycosylation sites follow: Asn-167, Asn-308, and Asn-338. Disulfide bonds link Cys-254–Cys-519, Cys-297–Cys-448, and Cys-466–Cys-477.

It belongs to the glycosyltransferase 29 family.

It localises to the golgi apparatus. Its subcellular location is the golgi stack membrane. It catalyses the reaction a beta-D-galactoside + CMP-N-acetyl-beta-neuraminate = an N-acetyl-alpha-neuraminyl-(2-&gt;6)-beta-D-galactosyl derivative + CMP + H(+). In terms of biological role, transfers sialic acid from the donor of substrate CMP-sialic acid to galactose containing acceptor substrates. The sequence is that of Beta-galactoside alpha-2,6-sialyltransferase 2 (ST6GAL2) from Gallus gallus (Chicken).